We begin with the raw amino-acid sequence, 541 residues long: Phosphatidylethanolamine transferase Mcr-1 (541 aa).

The Cytoplasmic segment spans residues 1–14; it reads MMQHTSVWYRRSVS. A helical membrane pass occupies residues 15 to 35; it reads PFVLVASVAVFLTATANLTFF. The Periplasmic portion of the chain corresponds to 36 to 47; it reads DKISQTYPIADN. Residues 48 to 68 form a helical membrane-spanning segment; sequence LGFVLTIAVVLFGAMLLITTL. Topologically, residues 69–73 are cytoplasmic; it reads LSSYR. The helical transmembrane segment at 74–94 threads the bilayer; sequence YVLKPVLILLLIMGAVTSYFT. Topologically, residues 95-122 are periplasmic; that stretch reads DTYGTVYDTTMLQNALQTDQAETKDLLN. Residues 123-143 traverse the membrane as a helical segment; sequence AAFIMRIIGLGVLPSLLVAFV. Over 144–157 the chain is Cytoplasmic; it reads KVDYPTWGKGLMRR. The chain crosses the membrane as a helical span at residues 158–178; that stretch reads LGLIVASLALILLPVVAFSSH. At 179 to 541 the chain is on the periplasmic side; that stretch reads YASFFRVHKP…KVKDRTAFIR (363 aa). Zn(2+)-binding residues include Glu246 and Thr285. Cystine bridges form between Cys281–Cys291, Cys356–Cys364, and Cys414–Cys422. The residue at position 285 (Thr285) is a Phosphothreonine. Positions 465 and 466 each coordinate Zn(2+).

This sequence belongs to the phosphoethanolamine transferase family. As to quaternary structure, monomer. Phosphorylated at Thr-285; may represent an intermediate in the catalytic mechanism.

The protein resides in the cell inner membrane. The catalysed reaction is lipid A (E. coli) + a 1,2-diacyl-sn-glycero-3-phosphoethanolamine + H(+) = lipid A 4'-(2-aminoethyl diphosphate) (E. coli) + a 1,2-diacyl-sn-glycerol. EDTA may inhibit activity. May be inhibited by ethanolamine. In terms of biological role, probably catalyzes the addition of a phosphoethanolamine moiety to lipid A. Phosphoethanolamine modification of lipid A confers polymyxin resistance. Confers resistance to polymyxin-type antibiotics such as colistin; in the E.coli strain W3110. This Escherichia coli protein is Phosphatidylethanolamine transferase Mcr-1 (mcr1).